The following is a 640-amino-acid chain: 1-deoxy-D-xylulose-5-phosphate synthase (640 aa).

Thiamine diphosphate-binding positions include His-79 and 120 to 122; that span reads AHS. Asp-151 is a binding site for Mg(2+). Thiamine diphosphate-binding positions include 152 to 153, Asn-180, Tyr-289, and Glu-371; that span reads GA. A Mg(2+)-binding site is contributed by Asn-180.

It belongs to the transketolase family. DXPS subfamily. Homodimer. The cofactor is Mg(2+). Thiamine diphosphate serves as cofactor.

It catalyses the reaction D-glyceraldehyde 3-phosphate + pyruvate + H(+) = 1-deoxy-D-xylulose 5-phosphate + CO2. It participates in metabolic intermediate biosynthesis; 1-deoxy-D-xylulose 5-phosphate biosynthesis; 1-deoxy-D-xylulose 5-phosphate from D-glyceraldehyde 3-phosphate and pyruvate: step 1/1. Its function is as follows. Catalyzes the acyloin condensation reaction between C atoms 2 and 3 of pyruvate and glyceraldehyde 3-phosphate to yield 1-deoxy-D-xylulose-5-phosphate (DXP). This Erythrobacter litoralis (strain HTCC2594) protein is 1-deoxy-D-xylulose-5-phosphate synthase.